The chain runs to 184 residues: Signal peptidase complex catalytic subunit SEC11 (184 aa).

Topologically, residues 1–28 (MDFIKEQYNSLVLDLRKTFRNKRDGLSH) are cytoplasmic. A helical; Signal-anchor for type II membrane protein transmembrane segment spans residues 29 to 49 (ILNVICLLLNALMIWKLLVVF). The Lumenal segment spans residues 50–184 (TGCESPVVVV…MLIMILMGYE (135 aa)). Residues Ser63, His101, and Asp127 each act as charge relay system in the active site. A C-terminal short (CTS) helix region spans residues 170–181 (AIVSIMLIMILM).

This sequence belongs to the peptidase S26B family. In terms of assembly, component of the signal peptidase complex (SPC) composed of a catalytic subunit SEC11/SPC21 and three accessory subunits SPC25, SPC3/SPC22, SPC1/SPC12. Within the complex, interacts with SPC25. The complex induces a local thinning of the ER membrane which is used to measure the length of the signal peptide (SP) h-region of protein substrates. This ensures the selectivity of the complex towards h-regions shorter than 18-20 amino acids. The complex interacts with the SEC61 channel-forming translocon complex and is involved in the import of classical signal sequence-containing proteins. Phosphorylated. Phosphorylation increases catalytic activity.

Its subcellular location is the endoplasmic reticulum membrane. The catalysed reaction is Cleavage of hydrophobic, N-terminal signal or leader sequences from secreted and periplasmic proteins.. With respect to regulation, phosphorylation increases catalytic activity. Ca(2+) slightly increases catalytic activity in vitro. In terms of biological role, catalytic component of the signal peptidase complex (SPC) which catalyzes the cleavage of N-terminal signal sequences from nascent proteins as they are translocated into the lumen of the endoplasmic reticulum. Specifically cleaves N-terminal signal peptides that contain a hydrophobic alpha-helix (h-region) shorter than 18-20 amino acids. The polypeptide is Signal peptidase complex catalytic subunit SEC11 (Plasmodium falciparum (isolate 3D7)).